The chain runs to 389 residues: Chalcone synthase E (389 aa).

The active site involves C164.

The protein belongs to the thiolase-like superfamily. Chalcone/stilbene synthases family.

The enzyme catalyses (E)-4-coumaroyl-CoA + 3 malonyl-CoA + 3 H(+) = 2',4,4',6'-tetrahydroxychalcone + 3 CO2 + 4 CoA. It functions in the pathway secondary metabolite biosynthesis; flavonoid biosynthesis. The primary product of this enzyme is 4,2',4',6'-tetrahydroxychalcone (also termed naringenin-chalcone or chalcone) which can under specific conditions spontaneously isomerize into naringenin. In Ipomoea nil (Japanese morning glory), this protein is Chalcone synthase E (CHSE).